We begin with the raw amino-acid sequence, 575 residues long: Electron transfer flavoprotein-ubiquinone oxidoreductase, mitochondrial (575 aa).

Residues 1–33 (MQRVLRAAAAGIGHASGHRAPRWGAAAAAARWL) constitute a mitochondrion transit peptide. 44–58 (VVVVGAGPAGLAAAI) contacts FAD. The stretch at 82–103 (VGAHVLSGNVFEPRALDELIPK) is an intramembrane region. A ubiquinone is bound by residues Gly-276 and Gly-277. An intramembrane segment occupies 343 to 363 (IPNPVFPGGAIIGCSAGFLNV). Residues Cys-520, Cys-544, Cys-547, and Cys-550 each contribute to the [4Fe-4S] cluster site. Residues 535–564 (QKLHINAQNCLHCKACDIKDPKQNIEWTVP) form the 4Fe-4S ferredoxin-type domain.

This sequence belongs to the ETF-QO/FixC family. [4Fe-4S] cluster serves as cofactor. The cofactor is FAD.

It localises to the mitochondrion inner membrane. The enzyme catalyses a ubiquinone + reduced [electron-transfer flavoprotein] = a ubiquinol + oxidized [electron-transfer flavoprotein] + H(+). In terms of biological role, accepts electrons from ETF and reduces ubiquinone. In Oryza sativa subsp. japonica (Rice), this protein is Electron transfer flavoprotein-ubiquinone oxidoreductase, mitochondrial.